A 559-amino-acid chain; its full sequence is Potassium-transporting ATPase potassium-binding subunit (559 aa).

Transmembrane regions (helical) follow at residues 5-25 (GFLLNASFLLILLVLAKPLGS), 27-47 (LARLIAAVPLPGVAGVERILW), 63-83 (LLALLTLNLLGLGILFCLLFW), 132-152 (GLTVQNFLSAATGIAVVFALI), 170-190 (LVRITLWILFPVALIIALFFI), 253-273 (LAQMLAIFLIPAALCFAFGEA), 283-303 (LLWAMSFIFVVCVAVVMWAEV), 327-347 (FGVLASSLFAVVTTAASCGAV), 356-376 (ALGGMVPMWLMQIGEVVFGGV), 379-399 (GLYGMLLFVLLAVFIAGLMIG), 416-436 (MTALAILVTPMLVLLGSALAM), 484-504 (LLAFCMFVGRFGVIIPVMAIA), and 524-544 (GALFIGLLIGTVLLVGALTFI).

Belongs to the KdpA family. The system is composed of three essential subunits: KdpA, KdpB and KdpC.

The protein localises to the cell inner membrane. In terms of biological role, part of the high-affinity ATP-driven potassium transport (or Kdp) system, which catalyzes the hydrolysis of ATP coupled with the electrogenic transport of potassium into the cytoplasm. This subunit binds the periplasmic potassium ions and delivers the ions to the membrane domain of KdpB through an intramembrane tunnel. The polypeptide is Potassium-transporting ATPase potassium-binding subunit (Salmonella newport (strain SL254)).